We begin with the raw amino-acid sequence, 320 residues long: HPr kinase/phosphorylase (320 aa).

Catalysis depends on residues H139 and K160. An ATP-binding site is contributed by 154-161 (GDSGVGKS). Residue S161 participates in Mg(2+) binding. The Proton acceptor; for phosphorylation activity. Proton donor; for dephosphorylation activity role is filled by D178. The segment at 202–211 (MEIRGIGIID) is important for the catalytic mechanism of both phosphorylation and dephosphorylation. A Mg(2+)-binding site is contributed by E203. The active site involves R244. Residues 265-270 (PVKTGR) are important for the catalytic mechanism of dephosphorylation.

It belongs to the HPrK/P family. In terms of assembly, homohexamer. It depends on Mg(2+) as a cofactor.

The catalysed reaction is [HPr protein]-L-serine + ATP = [HPr protein]-O-phospho-L-serine + ADP + H(+). It carries out the reaction [HPr protein]-O-phospho-L-serine + phosphate + H(+) = [HPr protein]-L-serine + diphosphate. Functionally, catalyzes the ATP- as well as the pyrophosphate-dependent phosphorylation of a specific serine residue in HPr, a phosphocarrier protein of the phosphoenolpyruvate-dependent sugar phosphotransferase system (PTS). HprK/P also catalyzes the pyrophosphate-producing, inorganic phosphate-dependent dephosphorylation (phosphorolysis) of seryl-phosphorylated HPr (P-Ser-HPr). The two antagonistic activities of HprK/P are regulated by several intracellular metabolites, which change their concentration in response to the absence or presence of rapidly metabolisable carbon sources (glucose, fructose, etc.) in the growth medium. Therefore, by controlling the phosphorylation state of HPr, HPrK/P is a sensor enzyme that plays a major role in the regulation of carbon metabolism and sugar transport: it mediates carbon catabolite repression (CCR), and regulates PTS-catalyzed carbohydrate uptake and inducer exclusion. This Limosilactobacillus reuteri (strain DSM 20016) (Lactobacillus reuteri) protein is HPr kinase/phosphorylase.